Reading from the N-terminus, the 485-residue chain is Retron Mx162 reverse transcriptase (485 aa).

The interval 1–33 (MTARLDPFVPAASPQAVPTPELTAPSSDAAAKR) is disordered. One can recognise a Reverse transcriptase domain in the interval 167 to 407 (RWFAFHREVD…TRQRVTGLVV (241 aa)). Mg(2+)-binding residues include aspartate 250, aspartate 346, and aspartate 347.

It belongs to the bacterial reverse transcriptase family.

It catalyses the reaction DNA(n) + a 2'-deoxyribonucleoside 5'-triphosphate = DNA(n+1) + diphosphate. MsDNA synthesis is inhibited by rifampicin and chloramphenicol. Functionally, reverse transcriptase (RT) responsible for synthesis of msDNA-Mx162 (a branched molecule with RNA linked by a 2',5'-phosphodiester bond to ssDNA). The retron transcript serves as primer (from a conserved internal G residue) and template for the reaction, and codes for the RT. The retron is involved in antiviral defense. This Myxococcus xanthus protein is Retron Mx162 reverse transcriptase.